The following is a 784-amino-acid chain: Protein DBF4 homolog B (784 aa).

The region spanning 27–117 (CREITFAGKS…SRGKQLLKKV (91 aa)) is the BRCT domain. The segment at 222-243 (TVKKKDPGDQEEEEGQRSQKPQ) is disordered. The DBF4-type zinc-finger motif lies at 244–293 (ARKRKGYCECCEETFDTLSEHLVGEHHFRFVSNPLSYKMIDDLAAQLTCD). Zn(2+)-binding residues include Cys-251, Cys-254, His-264, and His-270. Disordered stretches follow at residues 299–332 (FGSP…GNEG), 348–368 (HADC…AEEP), and 495–529 (TVGS…AQPA). A compositionally biased stretch (polar residues) spans 498–507 (SQGDVTSHSA).

Forms a complex with cdc7. Post-translationally, phosphorylated. Stably phosphorylated throughout the cell cycle.

Its subcellular location is the nucleus. Its function is as follows. Regulatory subunit for cdc7 which activates its kinase activity thereby playing a central role in DNA replication and cell proliferation. Specifically required during the initiation of DNA replication in egg and during early embryonic development. The complex cdc7-dbf4b phosphorylates mcm2 and mcm4 subunits and is required for cdc45 loading. The polypeptide is Protein DBF4 homolog B (dbf4b) (Xenopus laevis (African clawed frog)).